A 640-amino-acid polypeptide reads, in one-letter code: Lysophospholipase (640 aa).

Positions 1 to 25 (MWFLNSVNLLFLVCSVALHLDAVNA) are cleaved as a signal peptide. A PLA2c domain is found at 38–589 (DCDENINLVR…EKYCWNGTVD (552 aa)). N-linked (GlcNAc...) asparagine glycans are attached at residues asparagine 84, asparagine 126, asparagine 163, asparagine 173, asparagine 218, asparagine 280, asparagine 310, asparagine 317, asparagine 348, asparagine 391, asparagine 492, asparagine 516, asparagine 544, asparagine 568, and asparagine 585. The span at 594-610 (ISSTTSSSASSTSTSDS) shows a compositional bias: low complexity. The interval 594 to 616 (ISSTTSSSASSTSTSDSGNKENS) is disordered.

It belongs to the lysophospholipase family. Post-translationally, highly glycosylated.

Its subcellular location is the secreted. It catalyses the reaction a 1-acyl-sn-glycero-3-phosphocholine + H2O = sn-glycerol 3-phosphocholine + a fatty acid + H(+). In terms of biological role, catalyzes the release of fatty acids from lysophospholipids. At acidic pH the enzyme hydrolyzes all phospholipid substrates without metal ion. On the other hand, at alkaline pH the enzyme shows substrate specificity for phosphatidylcholine and lysophosphatidylcholine and requires Ca(2+), Fe(3+), or Al(3+) for the activity. The polypeptide is Lysophospholipase (PLB) (Kluyveromyces lactis (strain ATCC 8585 / CBS 2359 / DSM 70799 / NBRC 1267 / NRRL Y-1140 / WM37) (Yeast)).